A 365-amino-acid chain; its full sequence is Green-sensitive opsin P521 (365 aa).

Residues 1 to 51 (MTEAWNVAVFAARRSRDDDDTTRGSVFTYTNTNNTRGPFEGPNYHIAPRWV) lie on the Extracellular side of the membrane. A glycan (N-linked (GlcNAc...) asparagine) is linked at N33. A helical transmembrane segment spans residues 52–76 (YNLVSFFMIIVVIASCFTNGLVLVA). Topologically, residues 77-88 (TAKFKKLRHPLN) are cytoplasmic. Residues 89–113 (WILVNLAFVDLVETLVASTISVFNQ) form a helical membrane-spanning segment. Residues 114–128 (IFGYFILGHPLCVIE) lie on the Extracellular side of the membrane. C125 and C202 are disulfide-bonded. Residues 129–148 (GYVVSSCGITGLWSLAIISW) traverse the membrane as a helical segment. The Cytoplasmic segment spans residues 149–167 (ERWFVVCKPFGNIKFDSKL). A helical transmembrane segment spans residues 168 to 191 (AIIGIVFSWVWAWGWSAPPIFGWS). The Extracellular portion of the chain corresponds to 192-217 (RYWPHGLKTSCGPDVFSGSVELGCQS). A helical transmembrane segment spans residues 218 to 245 (FMLTLMITCCFLPLFIIIVCYLQVWMAI). The Cytoplasmic portion of the chain corresponds to 246 to 267 (RAVAAQQKESESTQKAEREVSR). Residues 268-291 (MVVVMIVAFCICWGPYASFVSFAA) form a helical membrane-spanning segment. The Extracellular portion of the chain corresponds to 292-299 (ANPGYAFH). A helical transmembrane segment spans residues 300-324 (PLAAALPAYFAKSATIYNPVIYVFM). K311 carries the post-translational modification N6-(retinylidene)lysine. Residues 325–365 (NRQFRNCIMQLFGKKVDDGSEASTTSRTEVSSVSNSSVAPA) are Cytoplasmic-facing. A disordered region spans residues 342-365 (DGSEASTTSRTEVSSVSNSSVAPA). Over residues 345–365 (EASTTSRTEVSSVSNSSVAPA) the composition is skewed to low complexity.

The protein belongs to the G-protein coupled receptor 1 family. Opsin subfamily. In terms of processing, phosphorylated on some or all of the serine and threonine residues present in the C-terminal region. In this lizard the color pigments are found in the rod-shaped photoreceptor cells which have been derived from ancestral cone-like photoreceptors.

It is found in the membrane. In terms of biological role, visual pigments are the light-absorbing molecules that mediate vision. They consist of an apoprotein, opsin, covalently linked to cis-retinal. This is Green-sensitive opsin P521 from Gekko gecko (Tokay gecko).